A 410-amino-acid chain; its full sequence is Mannosyl phosphorylinositol ceramide synthase regulatory protein CSG2 (410 aa).

The N-terminal stretch at 1–17 (MSTTLLWFSSVIGYVIQ) is a signal peptide. Topologically, residues 18–50 (TKCLSNIQSKKEISVGPNGTIATPETNGDNGNS) are lumenal. Residues Asn-35 and Asn-49 are each glycosylated (N-linked (GlcNAc...) asparagine). A helical membrane pass occupies residues 51 to 71 (SSLTFYLTFMYFASWLLLVPA). Residues 72–141 (SRLWEKMRPM…SVATFKYVAK (70 aa)) lie on the Cytoplasmic side of the membrane. Residues 142-161 (LTVLALIMIVADLTYNMALS) form a helical membrane-spanning segment. The Lumenal portion of the chain corresponds to 162–167 (LSPAFD). Residues 168–187 (VALMQNTAIFEIVTLLYGVC) form a helical membrane-spanning segment. At 188–197 (GISRKNYVFR) the chain is on the cytoplasmic side. The helical transmembrane segment at 198 to 217 (NFLIMMNAVIGILIISYTKA) threads the bilayer. Residues 218–245 (TCDMLAGKLSVNPNTGELSDPFLFDRLK) are Lumenal-facing. Residues 246–265 (GALICGLGALIMGPFAVLWN) form a helical membrane-spanning segment. Residues 266–285 (RWFCSNISKNENSAVVLVKQ) are Cytoplasmic-facing. The helical transmembrane segment at 286 to 305 (STHMALIGIIGMVILLPFIP) threads the bilayer. Residues 306–324 (KFPSRESVESISLFYNDKS) lie on the Lumenal side of the membrane. The helical transmembrane segment at 325–344 (FWFSLLGSIIFGSLPSLISI) threads the bilayer. At 345–355 (LELNRKAPAEY) the chain is on the cytoplasmic side. Residues 356–374 (LTTCNLGAIIFMGLAEWVC) traverse the membrane as a helical segment. At 375–385 (EPTQTTIVRWE) the chain is on the lumenal side. The chain crosses the membrane as a helical span at residues 386–404 (VIGYIMLTVSLLVLSVTLG). At 405–410 (EGKYHH) the chain is on the cytoplasmic side.

As to quaternary structure, heterodimer of CSH1 and CSG2, and SUR1 and CSG2.

Its subcellular location is the endoplasmic reticulum membrane. Required for calcium regulation. May regulate calcium accumulation by a non-vacuole organelle. Also regulates the activity of CSH1 and SUR1 during mannosyl phosphorylinositol ceramide synthesis. This is Mannosyl phosphorylinositol ceramide synthase regulatory protein CSG2 (CSG2) from Saccharomyces cerevisiae (strain ATCC 204508 / S288c) (Baker's yeast).